Here is a 394-residue protein sequence, read N- to C-terminus: Anhydro-N-acetylmuramic acid kinase (394 aa).

Residue 11–18 participates in ATP binding; the sequence is GTSADGID.

The protein belongs to the anhydro-N-acetylmuramic acid kinase family.

The enzyme catalyses 1,6-anhydro-N-acetyl-beta-muramate + ATP + H2O = N-acetyl-D-muramate 6-phosphate + ADP + H(+). It participates in amino-sugar metabolism; 1,6-anhydro-N-acetylmuramate degradation. It functions in the pathway cell wall biogenesis; peptidoglycan recycling. Catalyzes the specific phosphorylation of 1,6-anhydro-N-acetylmuramic acid (anhMurNAc) with the simultaneous cleavage of the 1,6-anhydro ring, generating MurNAc-6-P. Is required for the utilization of anhMurNAc either imported from the medium or derived from its own cell wall murein, and thus plays a role in cell wall recycling. The polypeptide is Anhydro-N-acetylmuramic acid kinase (Deinococcus geothermalis (strain DSM 11300 / CIP 105573 / AG-3a)).